The chain runs to 217 residues: MRQFIISENTMQKTSFRNHQVKRFSSQRSTRRKPENQPTRVILFNKPYDVLPQFTDEAGRKTLKEFIPVQGVYAAGRLDRDSEGLLVLTNNGALQARLTQPGKRTGKIYYVQVEGIPTQDALEALRNGVTLNDGPTLPAGAELVDEPAWLWPRNPPIRERKSIPTSWLKITLYEGRNRQVRRMTAHVGFPTLRLIRYAMGDYSLDNLANGEWREATE.

Residues 19–28 are compositionally biased toward polar residues; the sequence is HQVKRFSSQR. The segment at 19–38 is disordered; it reads HQVKRFSSQRSTRRKPENQP. Asp-79 serves as the catalytic Nucleophile.

It belongs to the pseudouridine synthase RsuA family.

It carries out the reaction uridine(2457) in 23S rRNA = pseudouridine(2457) in 23S rRNA. Its function is as follows. Responsible for synthesis of pseudouridine from uracil-2457 in 23S ribosomal RNA. The protein is Ribosomal large subunit pseudouridine synthase E (rluE) of Escherichia coli O157:H7.